The sequence spans 374 residues: Relaxin-3 receptor 2 (374 aa).

At 1–43 the chain is on the extracellular side; that stretch reads MPTLNTSASPPTFFWANASGGSVLSADDAPMPVKFLALRLMVA. Asn-5 and Asn-17 each carry an N-linked (GlcNAc...) asparagine glycan. Residues 44–64 form a helical membrane-spanning segment; it reads LAYGLVGAIGLLGNLAVLWVL. Residues 65 to 78 lie on the Cytoplasmic side of the membrane; that stretch reads SNCARRAPGPPSDT. Residues 79 to 99 traverse the membrane as a helical segment; that stretch reads FVFNLALADLGLALTLPFWAA. Residues 100 to 116 lie on the Extracellular side of the membrane; that stretch reads ESALDFHWPFGGALCKM. A disulfide bridge connects residues Cys-114 and Cys-191. Residues 117–137 traverse the membrane as a helical segment; sequence VLTATVLNVYASIFLITALSV. Over 138-154 the chain is Cytoplasmic; that stretch reads ARYWVVAMAAGPGTHLS. Residues 155–175 form a helical membrane-spanning segment; that stretch reads LFWARIATLAVWAAAALVTVP. Over 176 to 209 the chain is Extracellular; the sequence is TAVFGVEGEVCGVRLCLLRFPSRYWLGAYQLQRV. A helical membrane pass occupies residues 210–230; the sequence is VLAFMVPLGVITTSYLLLLAF. Residues 231–249 are Cytoplasmic-facing; the sequence is LQRRQRRRQDSRVVARSVR. The helical transmembrane segment at 250–270 threads the bilayer; sequence ILVASFFLCWFPNHVVTLWGV. Topologically, residues 271–281 are extracellular; that stretch reads LVKFDLVPWNS. Residues 282-302 traverse the membrane as a helical segment; it reads TFYTIQTYVFPVTTCLAHSNS. Residues 303 to 374 are Cytoplasmic-facing; that stretch reads CLNPVLYCLL…LTNLDRGTPG (72 aa).

This sequence belongs to the G-protein coupled receptor 1 family. Expressed in a broader range of tissues including brain, kidney, testis, thymus, placenta, prostate, salivary gland, thyroid and colon.

It localises to the cell membrane. Functionally, high affinity receptor for INSL5. Also acts as a receptor for RLN3/relaxin-3, as well as bradykinin and kallidin. Binding of the ligand inhibit cAMP accumulation. The chain is Relaxin-3 receptor 2 (RXFP4) from Homo sapiens (Human).